The chain runs to 117 residues: Large ribosomal subunit protein bL20 (117 aa).

The protein belongs to the bacterial ribosomal protein bL20 family.

Binds directly to 23S ribosomal RNA and is necessary for the in vitro assembly process of the 50S ribosomal subunit. It is not involved in the protein synthesizing functions of that subunit. In Leptospira biflexa serovar Patoc (strain Patoc 1 / Ames), this protein is Large ribosomal subunit protein bL20.